The following is a 98-amino-acid chain: NADH-ubiquinone oxidoreductase chain 4L (98 aa).

Helical transmembrane passes span 2–22, 29–49, and 61–81; these read LSIS…MLMF, SLLC…LIIL, and ILLL…LVMV.

Belongs to the complex I subunit 4L family. As to quaternary structure, core subunit of respiratory chain NADH dehydrogenase (Complex I) which is composed of 45 different subunits.

The protein localises to the mitochondrion inner membrane. It catalyses the reaction a ubiquinone + NADH + 5 H(+)(in) = a ubiquinol + NAD(+) + 4 H(+)(out). In terms of biological role, core subunit of the mitochondrial membrane respiratory chain NADH dehydrogenase (Complex I) which catalyzes electron transfer from NADH through the respiratory chain, using ubiquinone as an electron acceptor. Part of the enzyme membrane arm which is embedded in the lipid bilayer and involved in proton translocation. This Microcebus ravelobensis (Golden-brown mouse lemur) protein is NADH-ubiquinone oxidoreductase chain 4L (MT-ND4L).